A 291-amino-acid chain; its full sequence is Shikimate dehydrogenase (NADP(+)) (291 aa).

Shikimate is bound by residues 22-24 (SLS) and T69. The active-site Proton acceptor is the K73. 2 residues coordinate shikimate: N94 and D110. NADP(+)-binding positions include 131 to 135 (GSGGA) and L226. Y228 contacts shikimate. G249 is an NADP(+) binding site.

It belongs to the shikimate dehydrogenase family. As to quaternary structure, homodimer.

The catalysed reaction is shikimate + NADP(+) = 3-dehydroshikimate + NADPH + H(+). It functions in the pathway metabolic intermediate biosynthesis; chorismate biosynthesis; chorismate from D-erythrose 4-phosphate and phosphoenolpyruvate: step 4/7. Its function is as follows. Involved in the biosynthesis of the chorismate, which leads to the biosynthesis of aromatic amino acids. Catalyzes the reversible NADPH linked reduction of 3-dehydroshikimate (DHSA) to yield shikimate (SA). This Synechococcus sp. (strain JA-3-3Ab) (Cyanobacteria bacterium Yellowstone A-Prime) protein is Shikimate dehydrogenase (NADP(+)).